The chain runs to 61 residues: Small ribosomal subunit protein uS14 (61 aa).

Zn(2+) is bound by residues cysteine 24, cysteine 27, cysteine 40, and cysteine 43.

It belongs to the universal ribosomal protein uS14 family. Zinc-binding uS14 subfamily. As to quaternary structure, part of the 30S ribosomal subunit. Contacts proteins S3 and S10. Zn(2+) is required as a cofactor.

In terms of biological role, binds 16S rRNA, required for the assembly of 30S particles and may also be responsible for determining the conformation of the 16S rRNA at the A site. The protein is Small ribosomal subunit protein uS14 of Mycoplasmopsis agalactiae (strain NCTC 10123 / CIP 59.7 / PG2) (Mycoplasma agalactiae).